We begin with the raw amino-acid sequence, 173 residues long: Cytidylate kinase (173 aa).

7–15 provides a ligand contact to ATP; that stretch reads GLAGTGTST.

The protein belongs to the cytidylate kinase family. Type 2 subfamily.

The protein localises to the cytoplasm. It catalyses the reaction CMP + ATP = CDP + ADP. The catalysed reaction is dCMP + ATP = dCDP + ADP. This is Cytidylate kinase from Methanosphaera stadtmanae (strain ATCC 43021 / DSM 3091 / JCM 11832 / MCB-3).